Consider the following 357-residue polypeptide: MKFVDEAFIDVAAGDGGNGCVSFRHEKYKEFGGPNGGDGGRGGHVFAVADPNLNTLVDFRYSRRHEAKRGEHGMGSDMFGAAGADITLKMPVGTIISDADTGELLYELLTPGEVVTIAKGGDGGFGNLRFKSAINRAPRQKTPGWPGERKSLKLELKVLADVGLLGMPNAGKSTFIAAVSNARPKIADYPFTTLHPNLGVVRVGPEQSFVVADIPGLIEGASEGAGLGHQFLRHLQRTRLLLHVVDMAPFDESVDPVAQAKAIVAELKKYDTQLYEKPRWLVLNKLDMVPAEERAARVKDFVKRFKWKGPVFEISALTREGCEPLVQSIFQHVHAQQLAQNAPAEVDPRFAGEPPRG.

In terms of domain architecture, Obg spans 1–159 (MKFVDEAFID…KSLKLELKVL (159 aa)). One can recognise an OBG-type G domain in the interval 160-334 (ADVGLLGMPN…LVQSIFQHVH (175 aa)). GTP-binding positions include 166–173 (GMPNAGKS), 191–195 (FTTLH), 213–216 (DIPG), 284–287 (NKLD), and 315–317 (SAL). Residues S173 and T193 each coordinate Mg(2+).

The protein belongs to the TRAFAC class OBG-HflX-like GTPase superfamily. OBG GTPase family. As to quaternary structure, monomer. Requires Mg(2+) as cofactor.

The protein localises to the cytoplasm. Its function is as follows. An essential GTPase which binds GTP, GDP and possibly (p)ppGpp with moderate affinity, with high nucleotide exchange rates and a fairly low GTP hydrolysis rate. Plays a role in control of the cell cycle, stress response, ribosome biogenesis and in those bacteria that undergo differentiation, in morphogenesis control. This Acidovorax sp. (strain JS42) protein is GTPase Obg.